The following is a 1029-amino-acid chain: MLFRARGPVRGRGWGRPAEAPRRGRSPPWSPAWICCWALAGCQAAWAGDLPSSSSRPLPPCQEKDYHFEYTECDSSGSRWRVAIPNSAVDCSGLPDPVRGKECTFSCASGEYLEMKNQVCSKCGEGTYSLGSGIKFDEWDELPAGFSNIATFMDTVVGPSDSRPDGCNNSSWIPRGNYIESNRDDCTVSLIYAVHLKKSGYVFFEYQYVDNNIFFEFFIQNDQCQEMDTTTDKWVKLTDNGEWGSHSVMLKSGTNILYWRTTGILMGSKAVKPVLVKNITIEGVAYTSECFPCKPGTFSNKPGSFNCQVCPRNTYSEKGAKECIRCKDDSQFSEEGSSECTERPPCTTKDYFQIHTPCDEEGKTQIMYKWIEPKICREDLTDAIRLPPSGEKKDCPPCNPGFYNNGSSSCHPCPPGTFSDGTKECRPCPAGTEPALGFEYKWWNVLPGNMKTSCFNVGNSKCDGMNGWEVAGDHIQSGAGGSDNDYLILNLHIPGFKPPTSMTGATGSELGRITFVFETLCSADCVLYFMVDINRKSTNVVESWGGTKEKQAYTHIIFKNATFTFTWAFQRTNQGQDNRRFINDMVKIYSITATNAVDGVASSCRACALGSEQSGSSCVPCPPGHYIEKETNQCKECPPDTYLSIHQVYGKEACIPCGPGSKNNQDHSVCYSDCFFYHEKENQSLHYDFSNLSSVGSLMNGPSFTSKGTKYFHFFNISLCGHEGKKMALCTNNITDFTVKEIVAGSDDYTNLVGAFVCQSTIIPSESKGFRAALSSQSIILADTFIGVTVETTLKNINIKEDMFPVPTSQIPDVHFFYKSSTATTSCINGRSTAVKMRCNPTKSGAGVISVPSKCPAGTCDGCTFYFLWESAEACPLCTEHDFHEIEGACKRGFQETLYVWNEPKWCIKGISLPEKKLATCETVDFWLKVGAGVGAFTAVLLVALTCYFWKKNQKLEYKYSKLVMTTNSKECELPAADSCAIMEGEDNEEEVVYSNKQSLLGKLKSLATKEKEDHFESVQLKTSRSPNI.

An N-terminal signal peptide occupies residues 1–47 (MLFRARGPVRGRGWGRPAEAPRRGRSPPWSPAWICCWALAGCQAAWA). Topologically, residues 48–929 (GDLPSSSSRP…TCETVDFWLK (882 aa)) are extracellular. An N-linked (GlcNAc...) asparagine glycan is attached at Asn-169. 3 disulfides stabilise this stretch: Cys-293-Cys-310, Cys-323-Cys-346, and Cys-326-Cys-358. Asn-405 and Asn-691 each carry an N-linked (GlcNAc...) asparagine glycan. The region spanning 672-877 (SDCFFYHEKE…LWESAEACPL (206 aa)) is the MRH domain. Intrachain disulfides connect Cys-674/Cys-720, Cys-730/Cys-758, Cys-827/Cys-863, and Cys-839/Cys-875. A helical membrane pass occupies residues 930 to 950 (VGAGVGAFTAVLLVALTCYFW). The Cytoplasmic portion of the chain corresponds to 951–1029 (KKNQKLEYKY…QLKTSRSPNI (79 aa)). Phosphoserine is present on Ser-1018.

Belongs to the ELAPOR family.

Its subcellular location is the cell membrane. Functions as a regulator of the BMP signaling pathway and may be involved in epidermal differentiation. In Homo sapiens (Human), this protein is Endosome/lysosome-associated apoptosis and autophagy regulator family member 2.